Reading from the N-terminus, the 289-residue chain is 4-diphosphocytidyl-2-C-methyl-D-erythritol kinase (289 aa).

Lys10 is an active-site residue. 94 to 104 (PVAAGLAGGSS) provides a ligand contact to ATP. The active site involves Asp136.

It belongs to the GHMP kinase family. IspE subfamily.

The enzyme catalyses 4-CDP-2-C-methyl-D-erythritol + ATP = 4-CDP-2-C-methyl-D-erythritol 2-phosphate + ADP + H(+). It participates in isoprenoid biosynthesis; isopentenyl diphosphate biosynthesis via DXP pathway; isopentenyl diphosphate from 1-deoxy-D-xylulose 5-phosphate: step 3/6. Catalyzes the phosphorylation of the position 2 hydroxy group of 4-diphosphocytidyl-2C-methyl-D-erythritol. This is 4-diphosphocytidyl-2-C-methyl-D-erythritol kinase from Geobacillus sp. (strain WCH70).